An 84-amino-acid chain; its full sequence is MKFLFLFLAILLATEVPVISGKRHILRCMGNSGICRASCKKNEQPYLYCRNYQACCLQSYMRISISGKEENTDWSYEKQWPRLP.

The first 21 residues, 1–21 (MKFLFLFLAILLATEVPVISG), serve as a signal peptide directing secretion. Disulfide bonds link C28-C55, C35-C49, and C39-C56.

Belongs to the beta-defensin family. Abundant expression in the male reproductive tract only. Expressed abundantly in testis, while expression in epididymis decreased gradually from caput to cauda.

Its subcellular location is the secreted. Functionally, has antibacterial activity. The protein is Beta-defensin 119 (DEFB119) of Macaca mulatta (Rhesus macaque).